Consider the following 603-residue polypeptide: Protein Spindly (603 aa).

At Met1 the chain carries N-acetylmethionine. A coiled-coil region spans residues 1–442; it reads MESDVIADLR…LKLKYEPEEK (442 aa). Phosphoserine occurs at positions 513 and 553. The interval 542 to 577 is disordered; sequence ALSERSRNTPNSPRLAAESRLQREVKQGKETASKLE. Positions 561-577 are enriched in basic and acidic residues; that stretch reads RLQREVKQGKETASKLE.

Belongs to the Spindly family. In terms of assembly, interacts with KNTC1 and ZW10. These interactions appear weak and may be transient or indirect. Interacts with dynein intermediate chain and dynactin (DCTN1). Interacts with the catalytically active form of USP45. Post-translationally, monoubiquitinated with'Lys-48' linkage. Deubiquitinated by USP45.

Its subcellular location is the cytoplasm. The protein resides in the cytoskeleton. It is found in the microtubule organizing center. It localises to the centrosome. The protein localises to the chromosome. Its subcellular location is the centromere. The protein resides in the kinetochore. It is found in the nucleus. It localises to the spindle pole. Required for the localization of dynein and dynactin to the mitotic kintochore. Dynein is believed to control the initial lateral interaction between the kinetochore and spindle microtubules and to facilitate the subsequent formation of end-on kinetochore-microtubule attachments mediated by the NDC80 complex. Also required for correct spindle orientation. Does not appear to be required for the removal of spindle assembly checkpoint (SAC) proteins from the kinetochore upon bipolar spindle attachment. Acts as an adapter protein linking the dynein motor complex to various cargos and converts dynein from a non-processive to a highly processive motor in the presence of dynactin. Facilitates the interaction between dynein and dynactin and activates dynein processivity (the ability to move along a microtubule for a long distance without falling off the track). Plays a role in cell migration. The chain is Protein Spindly from Bos taurus (Bovine).